An 876-amino-acid chain; its full sequence is Alanine--tRNA ligase (876 aa).

Residues 2 to 461 (SKSTAEIRQA…VDSASEFKGY (460 aa)) form a catalytic region. Lysine 74 carries the N6-acetyllysine modification. Residues 553–705 (DEARRARIRL…EAVTGEGAIA (153 aa)) form an editing region. The Zn(2+) site is built by histidine 564, histidine 568, cysteine 666, and histidine 670. Residues 699-808 (TGEGAIATVH…STIIVLATVV (110 aa)) form an important for oligomerization region. The tract at residues 766 to 875 (IDVNGVKLLV…SVKGWVSAKL (110 aa)) is C-Ala domain.

This sequence belongs to the class-II aminoacyl-tRNA synthetase family. In terms of assembly, homotetramer. The cofactor is Zn(2+).

Its subcellular location is the cytoplasm. The catalysed reaction is tRNA(Ala) + L-alanine + ATP = L-alanyl-tRNA(Ala) + AMP + diphosphate. The enzyme catalyses (S)-lactate + ATP + H(+) = (S)-lactoyl-AMP + diphosphate. It catalyses the reaction (S)-lactoyl-AMP + L-lysyl-[protein] = N(6)-[(S)-lactoyl]-L-lysyl-[protein] + AMP + 2 H(+). Acetylation at Lys-74 decreases the alanylation activity for tRNA(Ala); a protein that is fully acetylated is inactive in vitro. Catalyzes the attachment of L-alanine to tRNA(Ala) in a two-step reaction: L-alanine is first activated by ATP to form Ala-AMP and then transferred to the acceptor end of tRNA(Ala). AlaRS also incorrectly activates the sterically smaller amino acid glycine as well as the sterically larger amino acid L-serine; generates 2-fold more mischarged Gly than Ser. These mischarged amino acids occur because the of inherent physicochemical limitations on discrimination between closely related amino acids (Ala, Gly and Ser) in the charging step. In presence of high levels of lactate, also acts as a protein lactyltransferase that mediates lactylation of lysine residues in target proteins. Functionally, edits mischarged Ser-tRNA(Ala) and Gly-tRNA(Ala) but not incorrectly charged Ser-tRNA(Thr). Dtd edits Gly-tRNA(Ala) 4-fold better than does AlaRS. In terms of biological role, attaches Ala to transfer-messenger RNA (tmRNA, also known as 10Sa RNA, the product of the ssrA gene). tmRNA plays a major role in rescue of stalled ribosomes via trans-translation. This chain is Alanine--tRNA ligase (alaS), found in Escherichia coli (strain K12).